The primary structure comprises 190 residues: uncharacterized protein (190 aa).

Residues 1-16 are Cytoplasmic-facing; the sequence is MAILPEFISQTPPVTR. Residues 17-37 form a helical membrane-spanning segment; the sequence is YIVLGTLFTTLAVNFGYVSDL. Topologically, residues 38–55 are lumenal; sequence KIFFNWKLFLAKGEYWRA. Residues 56-76 traverse the membrane as a helical segment; sequence ITTFLYVGPFGLELILYLSFL. Topologically, residues 77 to 98 are cytoplasmic; the sequence is LRFMSMLERSSPPPQTQSFLKT. The chain crosses the membrane as a helical span at residues 99–119; the sequence is VLIVWFSLLVTSYFSYMPFAA. Over 120-138 the chain is Lumenal; it reads SYFSFTMLYIWSWKHPLYR. A helical transmembrane segment spans residues 139–159; it reads ISILGLFDVKAPYVPWVMVLL. The Cytoplasmic portion of the chain corresponds to 160–163; that stretch reads RWLR. A helical transmembrane segment spans residues 164–184; sequence TGIFPLLDLISALIGHVYFFV. The Lumenal portion of the chain corresponds to 185–190; the sequence is TDFSTV.

It belongs to the derlin family.

It is found in the endoplasmic reticulum membrane. This is an uncharacterized protein from Schizosaccharomyces pombe (strain 972 / ATCC 24843) (Fission yeast).